The sequence spans 367 residues: Ribosomal lysine N-methyltransferase 5 (367 aa).

S-adenosyl-L-methionine contacts are provided by residues tryptophan 110, 170 to 172, aspartate 192, tryptophan 256, and methionine 288; that span reads GAG.

The protein belongs to the class I-like SAM-binding methyltransferase superfamily. RKM5 family.

S-adenosyl-L-methionine-dependent protein-lysine N-methyltransferase that monomethylates 60S ribosomal protein L1 (RPL1A and RPL1B) at 'Lys-46'. The sequence is that of Ribosomal lysine N-methyltransferase 5 (RKM5) from Saccharomyces cerevisiae (strain JAY291) (Baker's yeast).